The following is a 158-amino-acid chain: Transcriptional repressor NrdR (158 aa).

Residues 1–20 are disordered; the sequence is MRCPYCQSEDTQVKDSRPAE. Residues 3–34 fold into a zinc finger; it reads CPYCQSEDTQVKDSRPAEDGAVIRRRRVCSVC. A compositionally biased stretch (basic and acidic residues) spans 11–20; that stretch reads TQVKDSRPAE. One can recognise an ATP-cone domain in the interval 49–139; that stretch reads LMVVKKSGRR…VYRNFSKAVD (91 aa).

Belongs to the NrdR family. The cofactor is Zn(2+).

In terms of biological role, negatively regulates transcription of bacterial ribonucleotide reductase nrd genes and operons by binding to NrdR-boxes. The sequence is that of Transcriptional repressor NrdR from Brucella anthropi (strain ATCC 49188 / DSM 6882 / CCUG 24695 / JCM 21032 / LMG 3331 / NBRC 15819 / NCTC 12168 / Alc 37) (Ochrobactrum anthropi).